Reading from the N-terminus, the 124-residue chain is uncharacterized protein (124 aa).

The first 22 residues, 1 to 22, serve as a signal peptide directing secretion; it reads MGTSSVLLMIASSLILLEVVMT.

This is an uncharacterized protein from Caenorhabditis elegans.